The chain runs to 320 residues: Glutaminyl-peptide cyclotransferase (320 aa).

Positions 1–12 (MATRSPYKRQTK) are enriched in basic residues. Residues 1-22 (MATRSPYKRQTKRSMIQSLPAS) are disordered. Over 1 to 36 (MATRSPYKRQTKRSMIQSLPASSSASSRRRFISRKR) the chain is Cytoplasmic. The chain crosses the membrane as a helical; Signal-anchor for type II membrane protein span at residues 37–57 (FAMMIPLALLSGAVFLFFMPF). Over 58 to 320 (NSWGQSSGSS…GNYIEQQCLV (263 aa)) the chain is Lumenal. N-linked (GlcNAc...) asparagine glycosylation is found at N99 and N163.

It belongs to the plant glutaminyl-peptide cyclotransferase family. Post-translationally, glycosylated.

The protein localises to the endoplasmic reticulum membrane. The enzyme catalyses N-terminal L-glutaminyl-[peptide] = N-terminal 5-oxo-L-prolyl-[peptide] + NH4(+). Functionally, converts glutamine and N-terminal glutamyl residues in peptides to 5-oxoproline and 5-oxoproline residues. Not involved in the major pathway for 5-oxoproline production. This is Glutaminyl-peptide cyclotransferase (QCT) from Arabidopsis thaliana (Mouse-ear cress).